The primary structure comprises 142 residues: Transcription antitermination protein NusB (142 aa).

This sequence belongs to the NusB family.

Involved in transcription antitermination. Required for transcription of ribosomal RNA (rRNA) genes. Binds specifically to the boxA antiterminator sequence of the ribosomal RNA (rrn) operons. This is Transcription antitermination protein NusB from Persephonella marina (strain DSM 14350 / EX-H1).